A 400-amino-acid chain; its full sequence is MRTIDDLQVAGHRVLVRSDLNVPLDRSGDTPRITDDGRVRASVPTIAALLDRGARVIVTSHLGRPKGEPDPRYSLEPVAARLGELLGRPVAFAGDGTGDIAGAHAREVVAGLGDGEVALLENLRFSPGETSKDAVTRASFADALAALAEFYVGDAFGAVHRAHASVADVPKRLPHAAGRLVLTELDVLRRLSADPARPYAVVLGGSKVSDKLGVIRALLPKVDALLVGGGMCFTFLAALGHGVGGSLLEAEMIDTCKALLAEGGDRIVLPTDVVVADRFAADAQTAVVPADGIGDGWLGLDIGPASTALFAGRLDGAATVFWNGPMGVFELAPFAAGTRGVAKAIAAGDGFSVVGGGDSAAAVRTLGIPEDAFSHISTGGGASLEYLEGKTLPGLAALDV.

Residues 19–21, R38, 61–64, R124, and R161 contribute to the substrate site; these read DLN and HLGR. ATP contacts are provided by residues K211, G299, E330, and 356–359; that span reads GGDS.

It belongs to the phosphoglycerate kinase family. Monomer.

Its subcellular location is the cytoplasm. The enzyme catalyses (2R)-3-phosphoglycerate + ATP = (2R)-3-phospho-glyceroyl phosphate + ADP. Its pathway is carbohydrate degradation; glycolysis; pyruvate from D-glyceraldehyde 3-phosphate: step 2/5. The sequence is that of Phosphoglycerate kinase from Frankia alni (strain DSM 45986 / CECT 9034 / ACN14a).